A 76-amino-acid chain; its full sequence is Putative membrane protein insertion efficiency factor (76 aa).

Belongs to the UPF0161 family.

The protein localises to the cell inner membrane. Its function is as follows. Could be involved in insertion of integral membrane proteins into the membrane. This Paraburkholderia phytofirmans (strain DSM 17436 / LMG 22146 / PsJN) (Burkholderia phytofirmans) protein is Putative membrane protein insertion efficiency factor.